A 619-amino-acid polypeptide reads, in one-letter code: Probable Xaa-Pro aminopeptidase P (619 aa).

Mn(2+) is bound by residues D416, D427, E525, and E539.

Belongs to the peptidase M24B family. The cofactor is Mn(2+).

The catalysed reaction is Release of any N-terminal amino acid, including proline, that is linked to proline, even from a dipeptide or tripeptide.. Catalyzes the removal of a penultimate prolyl residue from the N-termini of peptides. The sequence is that of Probable Xaa-Pro aminopeptidase P (AMPP) from Tuber melanosporum (strain Mel28) (Perigord black truffle).